We begin with the raw amino-acid sequence, 234 residues long: (5-formylfuran-3-yl)methyl phosphate synthase (234 aa).

The active-site Schiff-base intermediate with substrate is the Lys27. Lys85 acts as the Proton acceptor in catalysis.

This sequence belongs to the MfnB family.

It carries out the reaction 2 D-glyceraldehyde 3-phosphate = 4-(hydroxymethyl)-2-furancarboxaldehyde phosphate + phosphate + 2 H2O. It functions in the pathway cofactor biosynthesis; methanofuran biosynthesis. Catalyzes the formation of 4-(hydroxymethyl)-2-furancarboxaldehyde phosphate (4-HFC-P) from two molecules of glyceraldehyde-3-P (GA-3-P). This is (5-formylfuran-3-yl)methyl phosphate synthase from Methanosarcina barkeri (strain Fusaro / DSM 804).